The following is a 1247-amino-acid chain: Structural polyprotein (1247 aa).

The disordered stretch occupies residues 52 to 103 (ALRTVPQKPRRTRKTKKQKQVKQEQQSTRNQKKKAPKQKQTQKKKRPGRRER). Composition is skewed to basic residues over residues 59 to 71 (KPRRTRKTKKQKQ) and 81 to 100 (NQKKKAPKQKQTQKKKRPGR). The interval 86–99 (APKQKQTQKKKRPG) is ribosome-binding. An intrachain disulfide couples C112 to C127. One can recognise a Peptidase S3 domain in the interval 112 to 260 (CIFEVKHEGK…KITPEGSVEW (149 aa)). H138 acts as the Charge relay system in catalysis. The interval 154–159 (KRSSKY) is interaction with spike glycoprotein E2. Catalysis depends on charge relay system residues D160 and S212. Residues 261–273 (SLALPVMCLLANT) are functions as an uncleaved signal peptide for the precursor of protein E3/E2. Disulfide bonds link C268/C277, C282/C286, C285/C317, C343/C449, C346/C352, C415/C429, C477/C590, C525/C549, and C527/C544. N272 carries an N-linked (GlcNAc...) asparagine; by host glycan. Residues 325–691 (NARENFNVYK…YYYELYPTTT (367 aa)) lie on the Extracellular side of the membrane. N587 carries N-linked (GlcNAc...) asparagine; by host glycosylation. Residues 692–712 (IAVLAAASIVVASLVSLSLGM) traverse the membrane as a helical segment. Over 713-747 (CICARRRCITPYELTPGATIPFLLGVLCCVKTAKA) the chain is Cytoplasmic. The interval 715-719 (CARRR) is interaction with the capsid protein. Residues C720, C740, and C741 are each lipidated (S-palmitoyl cysteine; by host). The transient transmembrane before p62-6K protein processing stretch occupies residues 720-740 (CITPYELTPGATIPFLLGVLC). C720 and C741 are disulfide-bonded. The Extracellular segment spans residues 748–762 (ASYYEAATYLWNEQQ). The helical transmembrane segment at 763 to 783 (PLFWLQLLIPLSAAIVACNCL) threads the bilayer. Over 784–787 (KLLP) the chain is Cytoplasmic. The helical transmembrane segment at 788–808 (CCCKTLTFLAVMSIGARTVSA) threads the bilayer. Residues 809–1223 (YEHATVIPNT…AMSWVQKITG (415 aa)) lie on the Extracellular side of the membrane. Disulfide bonds link C857–C922, C870–C902, C871–C904, and C876–C886. Positions 892–909 (VYPFMWGGAYCFCDAENT) are E1 fusion peptide loop. Residues N949 and N1078 are each glycosylated (N-linked (GlcNAc...) asparagine; by host). 4 disulfide bridges follow: C1067–C1079, C1109–C1184, C1114–C1188, and C1136–C1178. The chain crosses the membrane as a helical span at residues 1224–1244 (GVGLVVAIAALILIIVLCVSF). A lipid anchor (S-palmitoyl cysteine; by host) is attached at C1241. Topologically, residues 1245–1247 (SRH) are cytoplasmic.

In terms of assembly, homodimer. Homomultimer. Interacts with host karyopherin KPNA4; this interaction allows the nuclear import of the viral capsid protein. Interacts with spike glycoprotein E2. Interacts with host IRAK1; the interaction leads to inhibition of IRAK1-dependent signaling. The precursor of protein E3/E2 and E1 form a heterodimer shortly after synthesis. As to quaternary structure, the precursor of protein E3/E2 and E1 form a heterodimer shortly after synthesis. Processing of the precursor of protein E3/E2 into E2 and E3 results in a heterodimer of the spike glycoproteins E2 and E1. Spike at virion surface are constituted of three E2-E1 heterodimers. After target cell attachment and endocytosis, E1 change conformation to form homotrimers. Interacts with 6K protein. In terms of assembly, interacts with spike glycoprotein E1. Processing of the precursor of protein E3/E2 into E2 and E3 results in a heterodimer of the spike glycoproteins E2 and E1. Spike at virion surface are constituted of a trimer of E2-E1 heterodimers. Interacts with 6K protein. Interacts with host MXRA8; this interaction mediates virus entry. Oligomer. Interacts with spike glycoprotein E1. Interacts with spike glycoprotein E2. Structural polyprotein: Specific enzymatic cleavages in vivo yield mature proteins. Capsid protein is auto-cleaved during polyprotein translation, unmasking a signal peptide at the N-terminus of the precursor of E3/E2. The remaining polyprotein is then targeted to the host endoplasmic reticulum, where host signal peptidase cleaves it into pE2, 6K and E1 proteins. pE2 is further processed to mature E3 and E2 by host furin in trans-Golgi vesicle. In terms of processing, palmitoylated via thioester bonds. These palmitoylations may induce disruption of the C-terminus transmembrane. This would result in the reorientation of E2 C-terminus from lumenal to cytoplasmic side. Post-translationally, N-glycosylated. Palmitoylated via thioester bonds.

The protein resides in the virion. Its subcellular location is the host cytoplasm. It localises to the host cell membrane. The protein localises to the virion membrane. It is found in the host Golgi apparatus. The protein resides in the host trans-Golgi network. Its subcellular location is the host endoplasmic reticulum. It carries out the reaction Autocatalytic release of the core protein from the N-terminus of the togavirus structural polyprotein by hydrolysis of a -Trp-|-Ser- bond.. Its function is as follows. Possesses a protease activity that results in its autocatalytic cleavage from the nascent structural protein. Following its self-cleavage, the capsid protein transiently associates with ribosomes, and within several minutes the protein binds to viral RNA and rapidly assembles into icosahedric core particles. The resulting nucleocapsid eventually associates with the cytoplasmic domain of the spike glycoprotein E2 at the cell membrane, leading to budding and formation of mature virions. In case of infection, new virions attach to target cells and after clathrin-mediated endocytosis their membrane fuses with the host endosomal membrane. This leads to the release of the nucleocapsid into the cytoplasm, followed by an uncoating event necessary for the genomic RNA to become accessible. The uncoating might be triggered by the interaction of capsid proteins with ribosomes. Binding of ribosomes would release the genomic RNA since the same region is genomic RNA-binding and ribosome-binding. In terms of biological role, provides the signal sequence for the translocation of the precursor of protein E3/E2 to the host endoplasmic reticulum. Mediates pH protection of spike glycoprotein E1 during the transport via the secretory pathway. Functionally, plays a role in viral attachment to target host cell, by binding to the cell receptor MXRA8. Synthesized as a p62 precursor which is processed by furin at the cell membrane just before virion budding, giving rise to E2-E1 heterodimer. The p62-E1 heterodimer is stable, whereas E2-E1 is unstable and dissociate at low pH. p62 is processed at the last step, presumably to avoid E1 fusion activation before its final export to cell surface. E2 C-terminus contains a transitory transmembrane that would be disrupted by palmitoylation, resulting in reorientation of the C-terminal tail from lumenal to cytoplasmic side. This step is critical since E2 C-terminus is involved in budding by interacting with capsid proteins. This release of E2 C-terminus in cytoplasm occurs lately in protein export, and precludes premature assembly of particles at the endoplasmic reticulum membrane. Acts as a viroporin that participates in virus glycoprotein processing and transport to the plasma membrane, cell permeabilization and budding of viral particles. Disrupts the calcium homeostasis of the cell, probably at the endoplasmic reticulum level. This leads to cytoplasmic calcium elevation. Because of its lipophilic properties, the 6K protein is postulated to influence the selection of lipids that interact with the transmembrane domains of the glycoproteins, which, in turn, affects the deformability of the bilayer required for the extreme curvature that occurs as budding proceeds. Present in low amount in virions, about 3% compared to viral glycoproteins. Its function is as follows. Class II viral fusion protein. Fusion activity is inactive as long as E1 is bound to E2 in mature virion. After virus attachment to target cell via host MXRA8 and endocytosis, acidification of the endosome induce dissociation of E1/E2 heterodimer and concomitant trimerization of the E1 subunits. This E1 trimer is fusion active, and promotes release of viral nucleocapsid in cytoplasm after endosome and viral membrane fusion. Efficient fusion requires the presence of cholesterol and sphingolipid in the target membrane. This chain is Structural polyprotein, found in O'nyong-nyong virus (strain SG650) (ONNV).